A 755-amino-acid polypeptide reads, in one-letter code: Polyribonucleotide nucleotidyltransferase (755 aa).

Aspartate 527 and aspartate 533 together coordinate Mg(2+). Positions 593 to 652 (PRITTIKVPVDKIGEVIGPKGKMINSITEETGANISIEDDGTVFVGAADGASAQAAIDKI) constitute a KH domain. In terms of domain architecture, S1 motif spans 664–733 (GERFLGTVVK…NRGKISLVPV (70 aa)). Residues 734–755 (GEEDAAEAPAPAEAQPADAVTQ) are disordered. Low complexity predominate over residues 740 to 755 (EAPAPAEAQPADAVTQ).

It belongs to the polyribonucleotide nucleotidyltransferase family. Mg(2+) is required as a cofactor.

The protein localises to the cytoplasm. It carries out the reaction RNA(n+1) + phosphate = RNA(n) + a ribonucleoside 5'-diphosphate. Its function is as follows. Involved in mRNA degradation. Catalyzes the phosphorolysis of single-stranded polyribonucleotides processively in the 3'- to 5'-direction. This Mycobacteroides abscessus (strain ATCC 19977 / DSM 44196 / CCUG 20993 / CIP 104536 / JCM 13569 / NCTC 13031 / TMC 1543 / L948) (Mycobacterium abscessus) protein is Polyribonucleotide nucleotidyltransferase.